The chain runs to 3460 residues: Reelin (3460 aa).

Residues 1–25 (MERSGWARQTFLLALLLGATLRARA) form the signal peptide. In terms of domain architecture, Reelin spans 26-190 (AAGYYPRFSP…GAPTDVTVHP (165 aa)). A disulfide bridge connects residues C40 and C126. N-linked (GlcNAc...) asparagine glycosylation is present at N140. C154 and C178 form a disulfide bridge. N-linked (GlcNAc...) asparagine glycans are attached at residues N257, N289, and N305. A disulfide bridge links C539 with C580. Residues 592–603 (EFSTNHGRSWSL) form a BNR 1 repeat. C608 and C613 are joined by a disulfide. N628 carries N-linked (GlcNAc...) asparagine glycosylation. Residues 670–701 (IGPSCLKFCSGRGQCTRHGCKCDPGFSGPACE) form the EGF-like 1 domain. Cystine bridges form between C674–C684 and C691–C700. A BNR 2 repeat occupies 798-809 (HYSYDNGITWKL). An intrachain disulfide couples C894 to C936. One copy of the BNR 3 repeat lies at 951-962 (EYSTNHGLTWHL). 3 cysteine pairs are disulfide-bonded: C967-C974, C1033-C1043, and C1050-C1059. In terms of domain architecture, EGF-like 2 spans 1029–1060 (IGQQCPNMCSGHGSCDHGICRCDQGYQGTECH). Residues 1156 to 1167 (QYSNNGGIQWHL) form a BNR 4 repeat. N1266 carries N-linked (GlcNAc...) asparagine glycosylation. Cysteines 1270 and 1309 form a disulfide. The BNR 5 repeat unit spans residues 1322 to 1333 (QYSHDAGMSWFL). Residues C1338 and C1347 are joined by a disulfide bond. The region spanning 1408–1441 (ISEPCPSYCSGHGDCISGVCFCDLGYTAAQGTCV) is the EGF-like 3 domain. One copy of the BNR 6 repeat lies at 1534 to 1545 (QYSNDNGILWHL). N-linked (GlcNAc...) asparagine glycosylation occurs at N1599. C1632 and C1672 are joined by a disulfide. The BNR 7 repeat unit spans residues 1685–1696 (QYSLNNGKDWHL). Residues C1701 and C1708 are joined by a disulfide bond. N-linked (GlcNAc...) asparagine glycosylation is present at N1749. In terms of domain architecture, EGF-like 4 spans 1764-1795 (LASGCPWMCSGRGICDAGRCVCDRGFGGPYCV). A BNR 8 repeat occupies 1883 to 1894 (QFSISGGITWHL). A glycan (N-linked (GlcNAc...) asparagine) is linked at N1920. The stretch at 2042 to 2053 (EFSRDFGATWHL) is one BNR 9 repeat. Zn(2+)-binding residues include H2060 and H2073. Residues 2128–2160 (IGPQCEEMCNGQGSCINGTKCICDPGYSGPTCK) form the EGF-like 5 domain. 3 cysteine pairs are disulfide-bonded: C2132-C2142, C2136-C2148, and C2150-C2159. N2144 carries an N-linked (GlcNAc...) asparagine glycan. Zn(2+) is bound at residue E2178. An intrachain disulfide couples C2194 to C2234. One copy of the BNR 10 repeat lies at 2249–2260 (QYSLNGGLSWSL). E2263 contributes to the Zn(2+) binding site. N-linked (GlcNAc...) asparagine glycosylation is found at N2268 and N2316. Disulfide bonds link C2347–C2386, C2392–C2558, and C2543–C2583. The Zn(2+) site is built by E2396, E2398, and H2459. A BNR 11 repeat occupies 2398–2409 (EYSVDLGLSWHP). In terms of domain architecture, EGF-like 6 spans 2477 to 2508 (IGDGCIDMCSGHGRCIQGNCVCDEQWGGLYCD). A glycan (N-linked (GlcNAc...) asparagine) is linked at N2568. BNR repeat units lie at residues 2597–2608 (EYSVNGGITWNL) and 2777–2788 (QYSTDFGVSWNY). 5 disulfide bridges follow: C2793/C2800, C2856/C2866, C2860/C2871, C2873/C2882, and C2918/C2965. In terms of domain architecture, EGF-like 7 spans 2852–2883 (LGPGCLDNCRGHGDCLREQCICDPGYSGPNCY). N-linked (GlcNAc...) asparagine glycosylation is present at N2961. Residues 2978 to 2989 (DYSTDGGITWTL) form a BNR 14 repeat. Residues N3015 and N3072 are each glycosylated (N-linked (GlcNAc...) asparagine). A BNR 15 repeat occupies 3142–3154 (EYTKDARSDSWQL). A disulfide bridge links C3159 with C3169. N3184 carries an N-linked (GlcNAc...) asparagine glycan. Residues 3227–3259 (IGEACPKLCSGHGYCTTGAICICDESFQGDDCS) form the EGF-like 8 domain. Intrachain disulfides connect C3231–C3241, C3235–C3247, C3249–C3258, and C3295–C3345. One copy of the BNR 16 repeat lies at 3362–3373 (QYSVNNGITWHV). 2 N-linked (GlcNAc...) asparagine glycosylation sites follow: N3411 and N3438.

It belongs to the reelin family. As to quaternary structure, oligomer of disulfide-linked homodimers. N-glycosylated and to a lesser extent also O-glycosylated. As to expression, abundantly produced during brain ontogenesis by the Cajal-Retzius cells and other pioneer neurons located in the telencephalic marginal zone and by granule cells of the external granular layer of the cerebellum. In adult brain, preferentially expressed in GABAergic interneurons of prefrontal cortices, temporal cortex, hippocampus and glutamatergic granule cells of cerebellum. Expression is reduced to about 50% in patients with schizophrenia. Also expressed in fetal and adult liver.

The protein resides in the secreted. It localises to the extracellular space. Its subcellular location is the extracellular matrix. Its function is as follows. Extracellular matrix serine protease secreted by pioneer neurons that plays a role in layering of neurons in the cerebral cortex and cerebellum by coordinating cell positioning during neurodevelopment. Regulates microtubule function in neurons and neuronal migration. Binding to the extracellular domains of lipoprotein receptors VLDLR and LRP8/APOER2 induces tyrosine phosphorylation of DAB1 and modulation of TAU phosphorylation. Affects migration of sympathetic preganglionic neurons in the spinal cord, where it seems to act as a barrier to neuronal migration. Enzymatic activity is important for the modulation of cell adhesion. This is Reelin (RELN) from Homo sapiens (Human).